The primary structure comprises 131 residues: Small ribosomal subunit protein uS8 (131 aa).

The protein belongs to the universal ribosomal protein uS8 family. Part of the 30S ribosomal subunit. Contacts proteins S5 and S12.

One of the primary rRNA binding proteins, it binds directly to 16S rRNA central domain where it helps coordinate assembly of the platform of the 30S subunit. In Aromatoleum aromaticum (strain DSM 19018 / LMG 30748 / EbN1) (Azoarcus sp. (strain EbN1)), this protein is Small ribosomal subunit protein uS8.